The following is a 241-amino-acid chain: Sugar fermentation stimulation protein homolog (241 aa).

It belongs to the SfsA family.

The sequence is that of Sugar fermentation stimulation protein homolog from Hahella chejuensis (strain KCTC 2396).